A 327-amino-acid chain; its full sequence is Vacuolar protein sorting-associated protein 26A (327 aa).

The segment at 306–327 (RTNFHQRFESPESQASAEQPEM) is disordered. Phosphoserine is present on S315. Residues 316–327 (PESQASAEQPEM) show a composition bias toward polar residues.

It belongs to the VPS26 family. Component of the heterotrimeric retromer cargo-selective complex (CSC), also described as vacuolar protein sorting subcomplex (VPS), formed by VPS26 (VPS26A or VPS26B), VPS29 and VPS35. The CSC has a highly elongated structure with VPS26 and VPS29 binding independently at opposite distal ends of VPS35 as central platform. The CSC is believed to associate with variable sorting nexins to form functionally distinct retromer complex variants. The originally described retromer complex (also called SNX-BAR retromer) is a pentamer containing the CSC and a heterodimeric membrane-deforming subcomplex formed between SNX1 or SNX2 and SNX5 or SNX6 (also called SNX-BAR subcomplex); the respective CSC and SNX-BAR subcomplexes associate with low affinity. The CSC associates with SNX3 to form a SNX3-retromer complex. The CSC associates with SNX27, the WASH complex and the SNX-BAR subcomplex to form the SNX27-retromer complex. Interacts with VPS29, VPS35, SNX27, SNX1, SNX2, SNX5, SNX6, SNX3, RAB7A, ECPAS, EHD1, WASHC5, SORL1.

Its subcellular location is the cytoplasm. The protein localises to the endosome membrane. It localises to the early endosome. Acts as a component of the retromer cargo-selective complex (CSC). The CSC is believed to be the core functional component of retromer or respective retromer complex variants acting to prevent missorting of selected transmembrane cargo proteins into the lysosomal degradation pathway. The recruitment of the CSC to the endosomal membrane involves RAB7A and SNX3. The SNX-BAR retromer mediates retrograde transport of cargo proteins from endosomes to the trans-Golgi network (TGN) and is involved in endosome-to-plasma membrane transport for cargo protein recycling. The SNX3-retromer mediates the retrograde endosome-to-TGN transport of WLS distinct from the SNX-BAR retromer pathway. The SNX27-retromer is believed to be involved in endosome-to-plasma membrane trafficking and recycling of a broad spectrum of cargo proteins. The CSC complex seems to act as recruitment hub for other proteins, such as the WASH complex and TBC1D5. Required for retrograde transport of lysosomal enzyme receptor IGF2R. Required to regulate transcytosis of the polymeric immunoglobulin receptor (pIgR-pIgA). Required for the endosomal localization of WASHC2 (indicative for the WASH complex). Required for the endosomal localization of TBC1D5. Mediates retromer cargo recognition of SORL1 and is involved in trafficking of SORL1 implicated in sorting and processing of APP. Involved in retromer-independent lysosomal sorting of F2R. Involved in recycling of ADRB2. Acts redundantly with VSP26B in SNX-27 mediated endocytic recycling of SLC2A1/GLUT1. Enhances the affinity of SNX27 for PDZ-binding motifs in cargo proteins. The sequence is that of Vacuolar protein sorting-associated protein 26A (VPS26A) from Bos taurus (Bovine).